Reading from the N-terminus, the 888-residue chain is Leukocyte tyrosine kinase receptor (888 aa).

An N-terminal signal peptide occupies residues 1–16; the sequence is MGCSHRLLLWLGAAGT. Over 17-421 the chain is Extracellular; it reads ILCSNSEFQT…CMDLPTTASP (405 aa). 2 disulfides stabilise this stretch: Cys73/Cys86 and Cys168/Cys179. The segment at 226 to 294 is disordered; the sequence is LVAAGGGGRS…RSPREGAEGG (69 aa). The span at 260–273 shows a compositional bias: gly residues; that stretch reads GSGGRGGAAGGGSG. Cys297 and Cys319 form a disulfide bridge. 2 N-linked (GlcNAc...) asparagine glycosylation sites follow: Asn377 and Asn409. Residues 422-446 form a helical membrane-spanning segment; the sequence is LILMGAVVAALALSLLMMCAVLILV. Residues 447–888 are Cytoplasmic-facing; sequence NQKCQGLWGT…SSSSSIPGIQ (442 aa). Residues 506–782 enclose the Protein kinase domain; it reads VTLLRALGHG…IQYCTQDPDV (277 aa). ATP-binding positions include 512 to 520 and Lys540; that span reads LGHGAFGEV. Residue Asp639 is the Proton acceptor of the active site. Tyr672 bears the Phosphotyrosine; by autocatalysis mark. The tract at residues 857-888 is disordered; it reads TYGSWTPRGPQGEDTGIEHCNGSSSSSIPGIQ. A compositionally biased stretch (polar residues) spans 877 to 888; that stretch reads NGSSSSSIPGIQ.

Belongs to the protein kinase superfamily. Tyr protein kinase family. Insulin receptor subfamily. As to quaternary structure, homodimer; homodimerizes following ligand-binding. Part of a complex including LTK, TNK2 and GRB2, in which GRB2 promotes LTK recruitment by TNK2. In terms of processing, phosphorylated at tyrosine residues by autocatalysis, which activates kinase activity. In terms of tissue distribution, subsets of lymphoid and neuronal cells.

It is found in the cell membrane. The protein localises to the endoplasmic reticulum. The enzyme catalyses L-tyrosyl-[protein] + ATP = O-phospho-L-tyrosyl-[protein] + ADP + H(+). With respect to regulation, activated by ligand-binding, leading to homodimerization and autophosphorylation. Receptor with a tyrosine-protein kinase activity. Following activation by ALKAL1 or ALKAL2 ligands at the cell surface, transduces an extracellular signal into an intracellular response. Ligand-binding to the extracellular domain induces tyrosine kinase activation, leading to activation of the mitogen-activated protein kinase (MAPK) pathway. Phosphorylates almost exclusively at the first tyrosine of the Y-x-x-x-Y-Y motif. The exact function of this protein is not known; studies with chimeric proteins demonstrate its ability to promote growth and specifically neurite outgrowth, and cell survival. Involved in regulation of the secretory pathway involving endoplasmic reticulum (ER) export sites (ERESs) and ER to Golgi transport. In Mus musculus (Mouse), this protein is Leukocyte tyrosine kinase receptor.